The following is a 347-amino-acid chain: Protein RecA (347 aa).

67–74 serves as a coordination point for ATP; that stretch reads GPESSGKT.

Belongs to the RecA family.

The protein resides in the cytoplasm. In terms of biological role, can catalyze the hydrolysis of ATP in the presence of single-stranded DNA, the ATP-dependent uptake of single-stranded DNA by duplex DNA, and the ATP-dependent hybridization of homologous single-stranded DNAs. It interacts with LexA causing its activation and leading to its autocatalytic cleavage. The chain is Protein RecA from Helicobacter acinonychis (strain Sheeba).